The sequence spans 302 residues: Sulfate adenylyltransferase subunit 2 (302 aa).

The protein belongs to the PAPS reductase family. CysD subfamily. In terms of assembly, heterodimer composed of CysD, the smaller subunit, and CysN.

The catalysed reaction is sulfate + ATP + H(+) = adenosine 5'-phosphosulfate + diphosphate. It functions in the pathway sulfur metabolism; hydrogen sulfide biosynthesis; sulfite from sulfate: step 1/3. Functionally, with CysN forms the ATP sulfurylase (ATPS) that catalyzes the adenylation of sulfate producing adenosine 5'-phosphosulfate (APS) and diphosphate, the first enzymatic step in sulfur assimilation pathway. APS synthesis involves the formation of a high-energy phosphoric-sulfuric acid anhydride bond driven by GTP hydrolysis by CysN coupled to ATP hydrolysis by CysD. This chain is Sulfate adenylyltransferase subunit 2, found in Parabacteroides distasonis (strain ATCC 8503 / DSM 20701 / CIP 104284 / JCM 5825 / NCTC 11152).